We begin with the raw amino-acid sequence, 119 residues long: Large ribosomal subunit protein uL18 (119 aa).

It belongs to the universal ribosomal protein uL18 family. In terms of assembly, part of the 50S ribosomal subunit; part of the 5S rRNA/L5/L18/L25 subcomplex. Contacts the 5S and 23S rRNAs.

Its function is as follows. This is one of the proteins that bind and probably mediate the attachment of the 5S RNA into the large ribosomal subunit, where it forms part of the central protuberance. This chain is Large ribosomal subunit protein uL18, found in Xylella fastidiosa (strain M23).